We begin with the raw amino-acid sequence, 235 residues long: MRVGVIGAMEQEVKLLREQIENCEIVSRGGCEIYTGKINGVDVALLKSGIGKVAAAIGTTLLLEHFRPDVVINTGSAGGLDAKLNVGDIVVSTEVRYHDADVTAFGYEPGQMAQCPPAFIADPKLVNIAQECIGSLKLNAVRGLICSGDAFINGAEPLARIRRTFPEVVAVEMESTAIGHVCHQFDTPFVVVRAISDVADKESHLSFDEFLSVAAQQSSLMVTTMLDKLKTETQF.

Glutamate 12 serves as the catalytic Proton acceptor. Substrate is bound by residues glycine 78, isoleucine 152, and 173 to 174 (ME). Residue aspartate 197 is the Proton donor of the active site.

It belongs to the PNP/UDP phosphorylase family. MtnN subfamily. Homodimer.

The enzyme catalyses S-adenosyl-L-homocysteine + H2O = S-(5-deoxy-D-ribos-5-yl)-L-homocysteine + adenine. It carries out the reaction S-methyl-5'-thioadenosine + H2O = 5-(methylsulfanyl)-D-ribose + adenine. It catalyses the reaction 5'-deoxyadenosine + H2O = 5-deoxy-D-ribose + adenine. The protein operates within amino-acid biosynthesis; L-methionine biosynthesis via salvage pathway; S-methyl-5-thio-alpha-D-ribose 1-phosphate from S-methyl-5'-thioadenosine (hydrolase route): step 1/2. Its function is as follows. Catalyzes the irreversible cleavage of the glycosidic bond in both 5'-methylthioadenosine (MTA) and S-adenosylhomocysteine (SAH/AdoHcy) to adenine and the corresponding thioribose, 5'-methylthioribose and S-ribosylhomocysteine, respectively. Also cleaves 5'-deoxyadenosine, a toxic by-product of radical S-adenosylmethionine (SAM) enzymes, into 5-deoxyribose and adenine. Thus, is required for in vivo function of the radical SAM enzymes biotin synthase and lipoic acid synthase, that are inhibited by 5'-deoxyadenosine accumulation. In Proteus mirabilis (strain HI4320), this protein is 5'-methylthioadenosine/S-adenosylhomocysteine nucleosidase.